The sequence spans 224 residues: Testis-expressed protein 30 (224 aa).

In Bos taurus (Bovine), this protein is Testis-expressed protein 30 (TEX30).